A 108-amino-acid polypeptide reads, in one-letter code: DNA-binding protein HBbu (108 aa).

Belongs to the bacterial histone-like protein family.

In terms of biological role, histone-like DNA-binding protein which is capable of wrapping DNA to stabilize it, and thus to prevent its denaturation under extreme environmental conditions. This Borreliella japonica (Borrelia japonica) protein is DNA-binding protein HBbu (hbb).